We begin with the raw amino-acid sequence, 375 residues long: 23S rRNA (uracil(747)-C(5))-methyltransferase RlmC (375 aa).

[4Fe-4S] cluster contacts are provided by C3, C11, C14, and C87. Positions 212, 241, 262, and 307 each coordinate S-adenosyl-L-methionine. C334 acts as the Nucleophile in catalysis.

This sequence belongs to the class I-like SAM-binding methyltransferase superfamily. RNA M5U methyltransferase family. RlmC subfamily.

It carries out the reaction uridine(747) in 23S rRNA + S-adenosyl-L-methionine = 5-methyluridine(747) in 23S rRNA + S-adenosyl-L-homocysteine + H(+). Functionally, catalyzes the formation of 5-methyl-uridine at position 747 (m5U747) in 23S rRNA. This is 23S rRNA (uracil(747)-C(5))-methyltransferase RlmC from Yersinia enterocolitica serotype O:8 / biotype 1B (strain NCTC 13174 / 8081).